Reading from the N-terminus, the 289-residue chain is ATP synthase gamma chain (289 aa).

It belongs to the ATPase gamma chain family. F-type ATPases have 2 components, CF(1) - the catalytic core - and CF(0) - the membrane proton channel. CF(1) has five subunits: alpha(3), beta(3), gamma(1), delta(1), epsilon(1). CF(0) has three main subunits: a, b and c.

Its subcellular location is the cell inner membrane. Functionally, produces ATP from ADP in the presence of a proton gradient across the membrane. The gamma chain is believed to be important in regulating ATPase activity and the flow of protons through the CF(0) complex. The protein is ATP synthase gamma chain of Pasteurella multocida (strain Pm70).